The chain runs to 489 residues: Betaine aldehyde dehydrogenase (489 aa).

K(+) is bound by residues Thr26 and Asp93. 150-152 (GAW) serves as a coordination point for NAD(+). Residue Lys162 is the Charge relay system of the active site. Residue 176-179 (KPSE) coordinates NAD(+). Residue Val180 participates in K(+) binding. 229–232 (GVET) serves as a coordination point for NAD(+). Residue Leu245 participates in K(+) binding. Catalysis depends on Glu251, which acts as the Proton acceptor. Positions 253, 285, and 386 each coordinate NAD(+). The active-site Nucleophile is Cys285. Cys285 bears the Cysteine sulfenic acid (-SOH) mark. 2 residues coordinate K(+): Lys456 and Gly459. The active-site Charge relay system is the Glu463.

It belongs to the aldehyde dehydrogenase family. Dimer of dimers. Requires K(+) as cofactor.

The catalysed reaction is betaine aldehyde + NAD(+) + H2O = glycine betaine + NADH + 2 H(+). It participates in amine and polyamine biosynthesis; betaine biosynthesis via choline pathway; betaine from betaine aldehyde: step 1/1. Functionally, involved in the biosynthesis of the osmoprotectant glycine betaine. Catalyzes the irreversible oxidation of betaine aldehyde to the corresponding acid. This chain is Betaine aldehyde dehydrogenase, found in Burkholderia mallei (strain SAVP1).